The primary structure comprises 256 residues: Type III pantothenate kinase (256 aa).

6 to 13 (DIGNTHTV) contacts ATP. Residues Tyr-100 and 107-110 (GADR) contribute to the substrate site. Asp-109 serves as the catalytic Proton acceptor. Asp-129 serves as a coordination point for K(+). Residue Thr-132 coordinates ATP. Thr-184 lines the substrate pocket.

It belongs to the type III pantothenate kinase family. In terms of assembly, homodimer. Requires NH4(+) as cofactor. The cofactor is K(+).

The protein resides in the cytoplasm. It carries out the reaction (R)-pantothenate + ATP = (R)-4'-phosphopantothenate + ADP + H(+). Its pathway is cofactor biosynthesis; coenzyme A biosynthesis; CoA from (R)-pantothenate: step 1/5. In terms of biological role, catalyzes the phosphorylation of pantothenate (Pan), the first step in CoA biosynthesis. The sequence is that of Type III pantothenate kinase from Acidothermus cellulolyticus (strain ATCC 43068 / DSM 8971 / 11B).